A 248-amino-acid chain; its full sequence is Triosephosphate isomerase (248 aa).

Substrate is bound by residues N10 and K12. The active-site Electrophile is the H95. E165 acts as the Proton acceptor in catalysis.

It belongs to the triosephosphate isomerase family. Homodimer.

The enzyme catalyses D-glyceraldehyde 3-phosphate = dihydroxyacetone phosphate. It functions in the pathway carbohydrate biosynthesis; gluconeogenesis. It participates in carbohydrate degradation; glycolysis; D-glyceraldehyde 3-phosphate from glycerone phosphate: step 1/1. The chain is Triosephosphate isomerase (TPI1) from Debaryomyces hansenii (strain ATCC 36239 / CBS 767 / BCRC 21394 / JCM 1990 / NBRC 0083 / IGC 2968) (Yeast).